A 146-amino-acid chain; its full sequence is Hemoglobin subunit beta (146 aa).

Position 1 is an N-acetylvaline (valine 1). The Globin domain maps to 2–146 (HLSGEEKTAL…VANALAHKYH (145 aa)). Position 44 is a phosphoserine (serine 44). Lysine 59 carries the post-translational modification N6-acetyllysine. Heme b is bound at residue histidine 63. Residue lysine 82 is modified to N6-acetyllysine. Histidine 92 is a heme b binding site. An S-nitrosocysteine modification is found at cysteine 93. Lysine 144 is modified (N6-acetyllysine).

This sequence belongs to the globin family. Heterotetramer of two alpha chains and two beta chains. Red blood cells.

In terms of biological role, involved in oxygen transport from the lung to the various peripheral tissues. This is Hemoglobin subunit beta from Tamiasciurus hudsonicus (American red squirrel).